The chain runs to 56 residues: UPF0339 protein NMA1193/NMA1859 (56 aa).

Belongs to the UPF0339 family.

This chain is UPF0339 protein NMA1193/NMA1859, found in Neisseria meningitidis serogroup A / serotype 4A (strain DSM 15465 / Z2491).